The following is a 143-amino-acid chain: UPF0651 protein P31B10.02, mitochondrial (143 aa).

Residues 48–93 (IYDGIRVPPKPEEPLNCCQSGCAICVWDVYADDLEEYNRARRKAKR) enclose the Oxidoreductase-like domain.

It belongs to the UPF0651 family.

Its subcellular location is the mitochondrion. This Schizosaccharomyces pombe (strain 972 / ATCC 24843) (Fission yeast) protein is UPF0651 protein P31B10.02, mitochondrial.